Consider the following 713-residue polypeptide: MNPIVKSFQYGQHTVTLETGVMARQATAAVMVSMDDTCVFVTVVGKKEADHGRDFFPLTVNYQERTYAAGRIPGGFFRREGRPSEGETLTSRLIDRPIRPLFPEGFLNEVQVVATVMSVNPLVSPDIVAMIGASAALAISGIPFGGPIAAARVGYMNGQYVLNPTTAELPQSDLDLVVAGTANAVLMVESEAAILSEEVMLGAVVYGHEQMQVVINAINEFAADVGTQPWDWTPPATNEALKAKIAELATAELGEAYRITEKAVRYAAIGAIKQRVIEQVIAAGVEDDAKKIGEEFHSLESRIVRGRVVRGEPRIDGRDPEMIRALSVGTGILPRAHGSALFTRGETQAIVVATLGTERDAQNIDELAGHRADRFMLHYNFPPYCVGETGMMGSPKRREIGHGRLAKRGVAAVMPSAAEFPYVVRVVSEITESNGSSSMASVCGSSLALMDAGVPIKASVAGIAMGLVKEEEGFVVLSDILGDEDHLGDMDFKVAGTTQGITALQMDIKIEGITKEIMEIALKQARGARLHILKVMDEAIQAPRAEISDFAPRIHTIKINPEKIKDVIGKGGSVIRALTEETGTNIELDDDGTVRISAVANEAAMEAIRRIEAITAEIEVNRIYEGKVVRLADFGAFVNILPGKDGLVHISQITDARVQNVADFLKLGDVVKVKVLEVDRQGRVRLSIKEANAPTEAVAPAADVAAVEEPAAE.

2 residues coordinate Mg(2+): Asp485 and Asp491. Residues 552–611 (PRIHTIKINPEKIKDVIGKGGSVIRALTEETGTNIELDDDGTVRISAVANEAAMEAIRRI) form the KH domain. One can recognise an S1 motif domain in the interval 621–689 (NRIYEGKVVR…RQGRVRLSIK (69 aa)).

This sequence belongs to the polyribonucleotide nucleotidyltransferase family. As to quaternary structure, component of the RNA degradosome, which is a multiprotein complex involved in RNA processing and mRNA degradation. The cofactor is Mg(2+).

It localises to the cytoplasm. The catalysed reaction is RNA(n+1) + phosphate = RNA(n) + a ribonucleoside 5'-diphosphate. Involved in mRNA degradation. Catalyzes the phosphorolysis of single-stranded polyribonucleotides processively in the 3'- to 5'-direction. The polypeptide is Polyribonucleotide nucleotidyltransferase (Aeromonas salmonicida (strain A449)).